A 64-amino-acid polypeptide reads, in one-letter code: Putative neurotoxin 6 (64 aa).

A signal peptide spans 1-24 (MKNKFAALVITLFVLVLAIDNVTT).

It belongs to the scolopendra neurotoxin 6 family. Post-translationally, contains 3 disulfide bonds. In terms of tissue distribution, expressed by the venom gland.

It localises to the secreted. This Scolopendra mutilans (Chinese red-headed centipede) protein is Putative neurotoxin 6.